The primary structure comprises 175 residues: Peptide deformylase (175 aa).

2 residues coordinate Fe cation: Cys99 and His141. The active site involves Glu142. Residue His145 participates in Fe cation binding.

This sequence belongs to the polypeptide deformylase family. The cofactor is Fe(2+).

The catalysed reaction is N-terminal N-formyl-L-methionyl-[peptide] + H2O = N-terminal L-methionyl-[peptide] + formate. Functionally, removes the formyl group from the N-terminal Met of newly synthesized proteins. Requires at least a dipeptide for an efficient rate of reaction. N-terminal L-methionine is a prerequisite for activity but the enzyme has broad specificity at other positions. This chain is Peptide deformylase, found in Rickettsia typhi (strain ATCC VR-144 / Wilmington).